A 369-amino-acid chain; its full sequence is 3-isopropylmalate dehydrogenase (369 aa).

Position 76 to 89 (76 to 89 (GPKWDRNPSHLRPE)) interacts with NAD(+). Residues Arg-96, Arg-106, Arg-134, and Asp-223 each contribute to the substrate site. Mg(2+) is bound by residues Asp-223, Asp-247, and Asp-251. 281-293 (GSAPDIAGQNKAN) is an NAD(+) binding site.

The protein belongs to the isocitrate and isopropylmalate dehydrogenases family. LeuB type 1 subfamily. Homodimer. The cofactor is Mg(2+). Mn(2+) is required as a cofactor.

The protein resides in the cytoplasm. The enzyme catalyses (2R,3S)-3-isopropylmalate + NAD(+) = 4-methyl-2-oxopentanoate + CO2 + NADH. It participates in amino-acid biosynthesis; L-leucine biosynthesis; L-leucine from 3-methyl-2-oxobutanoate: step 3/4. Functionally, catalyzes the oxidation of 3-carboxy-2-hydroxy-4-methylpentanoate (3-isopropylmalate) to 3-carboxy-4-methyl-2-oxopentanoate. The product decarboxylates to 4-methyl-2 oxopentanoate. The protein is 3-isopropylmalate dehydrogenase (leuB) of Priestia megaterium (strain DSM 319 / IMG 1521) (Bacillus megaterium).